A 555-amino-acid chain; its full sequence is Vetispiradiene synthase 1 (555 aa).

Residues D308, D312, D451, T455, and E459 each contribute to the Mg(2+) site. A DDXXD motif motif is present at residues 308-312 (DDTFD).

This sequence belongs to the terpene synthase family. Tpsa subfamily. The cofactor is Mg(2+).

It localises to the cytoplasm. It catalyses the reaction (2E,6E)-farnesyl diphosphate = (-)-vetispiradiene + diphosphate. It participates in secondary metabolite biosynthesis; terpenoid biosynthesis. Sesquiterpene synthase that catalyzes the formation of vetispiradiene from trans,trans-farnesyl diphosphate. The initial internal cyclization produces the monocyclic intermediate germacrene A. This Hyoscyamus muticus (Egyptian henbane) protein is Vetispiradiene synthase 1.